The primary structure comprises 303 residues: Haloalkane dehalogenase (303 aa).

Positions 48 to 192 constitute an AB hydrolase-1 domain; that stretch reads PVLLLHGEPS…GTVTKLSQAV (145 aa). Residue Asp-123 is the Nucleophile of the active site. Asp-250 functions as the Proton donor in the catalytic mechanism. The active-site Proton acceptor is the His-280.

The protein belongs to the haloalkane dehalogenase family. Type 1 subfamily. In terms of assembly, monomer.

The catalysed reaction is 1-haloalkane + H2O = a halide anion + a primary alcohol + H(+). In terms of biological role, catalyzes hydrolytic cleavage of carbon-halogen bonds in halogenated aliphatic compounds, leading to the formation of the corresponding primary alcohols, halide ions and protons. This is Haloalkane dehalogenase from Psychrobacter cryohalolentis (strain ATCC BAA-1226 / DSM 17306 / VKM B-2378 / K5).